We begin with the raw amino-acid sequence, 239 residues long: dITP/XTP pyrophosphatase (239 aa).

Substrate is bound at residue T7 to K12. D74 functions as the Proton acceptor in the catalytic mechanism. A Mg(2+)-binding site is contributed by D74. Substrate-binding positions include S75, F182 to D185, K214, and H219 to R220.

Belongs to the HAM1 NTPase family. As to quaternary structure, homodimer. Requires Mg(2+) as cofactor.

The catalysed reaction is XTP + H2O = XMP + diphosphate + H(+). The enzyme catalyses dITP + H2O = dIMP + diphosphate + H(+). It catalyses the reaction ITP + H2O = IMP + diphosphate + H(+). Functionally, pyrophosphatase that catalyzes the hydrolysis of nucleoside triphosphates to their monophosphate derivatives, with a high preference for the non-canonical purine nucleotides XTP (xanthosine triphosphate), dITP (deoxyinosine triphosphate) and ITP. Seems to function as a house-cleaning enzyme that removes non-canonical purine nucleotides from the nucleotide pool, thus preventing their incorporation into DNA/RNA and avoiding chromosomal lesions. The polypeptide is dITP/XTP pyrophosphatase (Bifidobacterium animalis subsp. lactis (strain AD011)).